Consider the following 717-residue polypeptide: Polyribonucleotide nucleotidyltransferase (717 aa).

Mg(2+) is bound by residues Asp-486 and Asp-492. A KH domain is found at 553 to 612; the sequence is PRMITVKINPEKIRDVIGKGGSTIQALTKETGCTIDIQEDGTITIASTSSEGMAEAKRRI. The 69-residue stretch at 622–690 folds into the S1 motif domain; sequence GKIYSGTVLK…EKGRMRLSIK (69 aa). Residues 690 to 717 are disordered; that stretch reads KAAKAEEGDVPATAPQAPGAGDATSQQQ.

It belongs to the polyribonucleotide nucleotidyltransferase family. It depends on Mg(2+) as a cofactor.

The protein localises to the cytoplasm. The catalysed reaction is RNA(n+1) + phosphate = RNA(n) + a ribonucleoside 5'-diphosphate. Involved in mRNA degradation. Catalyzes the phosphorolysis of single-stranded polyribonucleotides processively in the 3'- to 5'-direction. This is Polyribonucleotide nucleotidyltransferase from Ralstonia nicotianae (strain ATCC BAA-1114 / GMI1000) (Ralstonia solanacearum).